The sequence spans 735 residues: Disintegrin and metalloproteinase domain-containing protein 2 (735 aa).

Positions 1–18 (MWLILLLLSGLSELGGLS) are cleaved as a signal peptide. Positions 19–180 (QSQTEGTREK…YKIRSIKPQR (162 aa)) are excised as a propeptide. The Extracellular portion of the chain corresponds to 19 to 686 (QSQTEGTREK…ASAYRSKSPR (668 aa)). N-linked (GlcNAc...) asparagine glycans are attached at residues asparagine 128, asparagine 226, and asparagine 279. The region spanning 184 to 381 (HYLEIHIVVE…QSSHCLQNQP (198 aa)) is the Peptidase M12B domain. 4 disulfides stabilise this stretch: cysteine 293–cysteine 376, cysteine 335–cysteine 360, cysteine 337–cysteine 342, and cysteine 449–cysteine 469. Residues asparagine 359, asparagine 463, asparagine 489, asparagine 569, and asparagine 585 are each glycosylated (N-linked (GlcNAc...) asparagine). Residues 389 to 476 (MAVCGNGEVE…EVCEDFFVQN (88 aa)) enclose the Disintegrin domain. Residues 615-648 (LGYDCNLEKCNHHGVCNNKKNCHCDPTYLPPDCK) enclose the EGF-like domain. Intrachain disulfides connect cysteine 619-cysteine 630, cysteine 624-cysteine 636, and cysteine 638-cysteine 647. The helical transmembrane segment at 687-707 (WPFFLIIPFYVVILVLIGMLV) threads the bilayer. Topologically, residues 708–735 (KVYSQRMKWRMDDFSSEEQFESESESKD) are cytoplasmic. The residue at position 729 (serine 729) is a Phosphoserine.

As to quaternary structure, heterodimer with ADAM1/fertilin subunit alpha. The signal and the metalloprotease domain are cleaved during the epididymal maturation of the spermatozoa. Expressed in the testis and testicular sperm (at protein level).

Its subcellular location is the membrane. Sperm surface membrane protein that may be involved in sperm-egg plasma membrane adhesion and fusion during fertilization. Could have a direct role in sperm-zona binding or migration of sperm from the uterus into the oviduct. Interactions with egg membrane could be mediated via binding between its disintegrin-like domain to one or more integrins receptors on the egg. This is a non catalytic metalloprotease-like protein. The polypeptide is Disintegrin and metalloproteinase domain-containing protein 2 (Mus musculus (Mouse)).